A 251-amino-acid chain; its full sequence is Cold shock-induced protein TIR2 (251 aa).

An N-terminal signal peptide occupies residues 1–18 (MAYIKIALLAAIAALASA). One copy of the PIR1/2/3 repeat lies at 207–225 (ASAISQISDGQVQATSTVS). Glycine 231 carries the GPI-anchor amidated glycine lipid modification. Residues 232–251 (AAKAVIGMGAGVMAAAAMLL) constitute a propeptide, removed in mature form.

Belongs to the SRP1/TIP1 family. Post-translationally, the GPI-anchor is attached to the protein in the endoplasmic reticulum and serves to target the protein to the cell surface. There, the glucosamine-inositol phospholipid moiety is cleaved off and the GPI-modified mannoprotein is covalently attached via its lipidless GPI glycan remnant to the 1,6-beta-glucan of the outer cell wall layer. In terms of processing, covalently linked to beta-1,3-glucan of the inner cell wall layer via an alkali-sensitive ester linkage between the gamma-carboxyl group of glutamic acids, arising from a specific glutamine within the PIR1/2/3 repeat, and hydroxyl groups of glucoses of beta-1,3-glucan chains.

Its subcellular location is the secreted. It localises to the cell wall. It is found in the membrane. Its function is as follows. Component of the cell wall. In Saccharomyces cerevisiae (strain ATCC 204508 / S288c) (Baker's yeast), this protein is Cold shock-induced protein TIR2 (TIR2).